A 953-amino-acid chain; its full sequence is UvrABC system protein A (953 aa).

33–40 (GLSGSGKS) serves as a coordination point for ATP. ABC transporter domains lie at 320-599 (WGST…EESI) and 619-949 (GHDN…RYLK). Residue 652–659 (GVSGSGKS) participates in ATP binding. Residues 752 to 778 (CEACQGDGLIKIEMHFLPDVYVKCDIC) form a C4-type zinc finger.

This sequence belongs to the ABC transporter superfamily. UvrA family. Forms a heterotetramer with UvrB during the search for lesions.

It localises to the cytoplasm. The UvrABC repair system catalyzes the recognition and processing of DNA lesions. UvrA is an ATPase and a DNA-binding protein. A damage recognition complex composed of 2 UvrA and 2 UvrB subunits scans DNA for abnormalities. When the presence of a lesion has been verified by UvrB, the UvrA molecules dissociate. This Rickettsia prowazekii (strain Madrid E) protein is UvrABC system protein A.